The sequence spans 327 residues: Flotillin-like protein FloA (327 aa).

2 helical membrane passes run 6–26 (VLFF…FTFV) and 28–48 (IMLW…TLVG).

Belongs to the flotillin-like FloA family. Homooligomerizes.

The protein resides in the cell membrane. It is found in the membrane raft. In terms of biological role, found in functional membrane microdomains (FMM) that may be equivalent to eukaryotic membrane rafts. FMMs are highly dynamic and increase in number as cells age. Flotillins are thought to be important factors in membrane fluidity. This chain is Flotillin-like protein FloA, found in Priestia megaterium (strain DSM 319 / IMG 1521) (Bacillus megaterium).